Reading from the N-terminus, the 128-residue chain is MRPVASFRPPPTFSALQGGASSQATKTAGIDQRGTNQAFSLLDPQSTQSNSTDSSFGEMGNLLMNQVKGVNSMQNQADSMVHSMLTGGDVNEAEVLTSVQKADLAFRMLMQIRNKLMDAYREIQQVQI.

A disordered region spans residues 1–60; sequence MRPVASFRPPPTFSALQGGASSQATKTAGIDQRGTNQAFSLLDPQSTQSNSTDSSFGEMG. Residues 33–55 show a composition bias toward polar residues; that stretch reads RGTNQAFSLLDPQSTQSNSTDSS.

This sequence belongs to the FliE family.

The protein localises to the bacterial flagellum basal body. This chain is Flagellar hook-basal body complex protein FliE, found in Rhodopirellula baltica (strain DSM 10527 / NCIMB 13988 / SH1).